We begin with the raw amino-acid sequence, 689 residues long: Glycine--tRNA ligase beta subunit (689 aa).

Belongs to the class-II aminoacyl-tRNA synthetase family. As to quaternary structure, tetramer of two alpha and two beta subunits.

It is found in the cytoplasm. The enzyme catalyses tRNA(Gly) + glycine + ATP = glycyl-tRNA(Gly) + AMP + diphosphate. The polypeptide is Glycine--tRNA ligase beta subunit (Salmonella dublin (strain CT_02021853)).